Here is a 310-residue protein sequence, read N- to C-terminus: Protein FAM153A (310 aa).

Disordered regions lie at residues 39–58 (LGVP…LCPP), 108–136 (QTNG…HTME), 156–184 (SYNG…DLEE), and 250–297 (TITG…KKSR). Low complexity predominate over residues 259 to 268 (SASPSSAPAE). The segment covering 270–282 (ATEKTKVEEEVKT) has biased composition (basic and acidic residues). Over residues 283–297 (RKPKKKTRKPSKKSR) the composition is skewed to basic residues.

It belongs to the FAM153 family.

The polypeptide is Protein FAM153A (FAM153A) (Homo sapiens (Human)).